A 959-amino-acid chain; its full sequence is rDNA transcriptional regulator pol5 (959 aa).

Residues S742 and S743 each carry the phosphoserine modification. Residues 936-959 form a disordered region; it reads HQQTSTAASSPQKTGHHENEKTNH. A compositionally biased stretch (polar residues) spans 937–948; the sequence is QQTSTAASSPQK. Over residues 950–959 the composition is skewed to basic and acidic residues; that stretch reads GHHENEKTNH.

The protein belongs to the MYBBP1A family. In terms of assembly, interacts with cdc10.

Its subcellular location is the nucleus. Its function is as follows. Plays an important role in the regulation of rRNA transcription. Binds to rDNA promoter fragments. This Schizosaccharomyces pombe (strain 972 / ATCC 24843) (Fission yeast) protein is rDNA transcriptional regulator pol5 (pol5).